A 444-amino-acid polypeptide reads, in one-letter code: C4-dicarboxylate transport protein (444 aa).

A run of 9 helical transmembrane segments spans residues 21–41 (HLYVQVLVAIAAGILLGHFYP), 57–77 (LVKMIIAPVIFLTVATGIAGM), 92–112 (IYFLTFSTLALIIGLIVANVV), 161–181 (GDILQVLFFSVLFGIALALVG), 201–221 (LVSILMKAAPIGAFGAMAFTI), 234–254 (LLIGTFYLTALLFVLVVLGAV), 320–340 (IYMTLAALFIAQATDIPLSLS), 345–365 (LLLVAMLSSKGAAGITGAGFI), and 368–388 (AATLSVVPAVPVAGMALILGI).

This sequence belongs to the dicarboxylate/amino acid:cation symporter (DAACS) (TC 2.A.23) family.

It localises to the cell inner membrane. Responsible for the transport of dicarboxylates such as succinate, fumarate, and malate from the periplasm across the membrane. This Brucella anthropi (strain ATCC 49188 / DSM 6882 / CCUG 24695 / JCM 21032 / LMG 3331 / NBRC 15819 / NCTC 12168 / Alc 37) (Ochrobactrum anthropi) protein is C4-dicarboxylate transport protein.